The primary structure comprises 500 residues: tRNA nucleotidyltransferase cca1 (500 aa).

The interval 122 to 139 (DYTNSNSSNKLVFGTPLE) is flexible loop. Positions 231-241 (ERIGVEVDKML) match the ERhxxExxxhh motif motif.

The protein belongs to the tRNA nucleotidyltransferase/poly(A) polymerase family.

It carries out the reaction a tRNA precursor + 2 CTP = a tRNA with a 3' CC end + 2 diphosphate. TRNA nucleotidyltransferase involved in the synthesis of the tRNA CCA terminus. In contrast to what is usually observed in eukaryotes for which one enzyme synthesizes the whole tRNA CCA terminus, in S.pombe, cca1 specifically adds two cytidine residues to a tRNA substrate lacking this sequence while cca2 specifically adds the terminal adenosine residue thereby completing the CCA sequence. The protein is tRNA nucleotidyltransferase cca1 of Schizosaccharomyces pombe (strain 972 / ATCC 24843) (Fission yeast).